The chain runs to 388 residues: Quinolone resistance protein NorA (388 aa).

12 consecutive transmembrane segments (helical) span residues 5 to 25, 42 to 62, 69 to 89, 99 to 119, 129 to 149, 157 to 177, 201 to 221, 239 to 259, 269 to 289, 293 to 313, 331 to 351, and 355 to 375; these read IFVLYFNIFLIFLGIGLVIPV, LLVAAFALSQMIISPFGGTLA, LIICIGLILFSVSEFMFAVGH, VIGGMSAGMVMPGVTGLIADI, FGYMSAIINSGFILGPGIGGF, MPFYFAGALGILAFIMSIVLI, WKVFITPVILTLVLSLGLSAF, DISIAITGGGIFGALFQIYFF, LTFIAWSLLYSVVVLILLVFA, WSIMLISFVVFIGFDMIRPAI, LNSTFTSMGNFIGPLIAGALF, and IEAPIYMAIGVSLAGVVIVLI.

The protein belongs to the major facilitator superfamily. TCR/Tet family.

The protein localises to the cell membrane. Its function is as follows. Involved in quinolone resistance. May constitute a membrane-associated active efflux pump of hydrophilic quinolones. The sequence is that of Quinolone resistance protein NorA (norA) from Staphylococcus aureus (strain MSSA476).